The chain runs to 397 residues: Elongation factor Tu (397 aa).

The 198-residue stretch at 10-207 folds into the tr-type G domain; it reads KPHCNIGTIG…AVDEYIPQPE (198 aa). The segment at 19–26 is G1; it reads GHVDHGKT. 19–26 is a GTP binding site; sequence GHVDHGKT. Residue threonine 26 coordinates Mg(2+). Residues 61-65 are G2; the sequence is GITIS. Residues 82–85 form a G3 region; the sequence is DCPG. GTP-binding positions include 82-86 and 137-140; these read DCPGH and NKVD. The interval 137–140 is G4; it reads NKVD. Residues 175–177 are G5; sequence SAL.

This sequence belongs to the TRAFAC class translation factor GTPase superfamily. Classic translation factor GTPase family. EF-Tu/EF-1A subfamily. Monomer.

Its subcellular location is the cytoplasm. It catalyses the reaction GTP + H2O = GDP + phosphate + H(+). GTP hydrolase that promotes the GTP-dependent binding of aminoacyl-tRNA to the A-site of ribosomes during protein biosynthesis. The protein is Elongation factor Tu of Zymomonas mobilis subsp. mobilis (strain ATCC 31821 / ZM4 / CP4).